The primary structure comprises 180 residues: Minor allergen Can f 2 (180 aa).

The first 18 residues, 1-18, serve as a signal peptide directing secretion; it reads MQLLLLTVGLALICGLQA. Asparagine 45 is a glycosylation site (N-linked (GlcNAc...) asparagine). Cysteine 82 and cysteine 175 are disulfide-bonded.

Belongs to the calycin superfamily. Lipocalin family. Tongue epithelial tissue and parotid gland.

The protein localises to the secreted. The chain is Minor allergen Can f 2 from Canis lupus familiaris (Dog).